We begin with the raw amino-acid sequence, 387 residues long: Phosphoglycerate kinase (387 aa).

Substrate-binding positions include 21–23 (DLN), arginine 36, 59–62 (HLGR), arginine 113, and arginine 146. Residues lysine 197, glutamate 314, and 340–343 (GGDT) contribute to the ATP site.

The protein belongs to the phosphoglycerate kinase family. In terms of assembly, monomer.

Its subcellular location is the cytoplasm. It carries out the reaction (2R)-3-phosphoglycerate + ATP = (2R)-3-phospho-glyceroyl phosphate + ADP. It functions in the pathway carbohydrate degradation; glycolysis; pyruvate from D-glyceraldehyde 3-phosphate: step 2/5. This Pseudomonas syringae pv. tomato (strain ATCC BAA-871 / DC3000) protein is Phosphoglycerate kinase.